The primary structure comprises 737 residues: Palmitoyltransferase akr1 (737 aa).

The tract at residues 1–60 (MSSGDPPSGLQASGSNSSAALGLSPPSAPSGKSAATPPKVATDDASVELSSMKSERSPAK) is disordered. Residues 1 to 314 (MSSGDPPSGL…YVRDKAIMSK (314 aa)) lie on the Cytoplasmic side of the membrane. Positions 7 to 38 (PSGLQASGSNSSAALGLSPPSAPSGKSAATPP) are enriched in low complexity. ANK repeat units lie at residues 97–126 (EGIT…DVNA), 131–160 (SVAT…DPLL), 164–193 (QGYN…PVDV), 197–226 (QGHT…NPNA), and 230–259 (GGLA…DRFA). A run of 2 helical transmembrane segments spans residues 315–335 (FFFF…SNMV) and 336–356 (VYFA…VAKK). Topologically, residues 357 to 372 (AASQGPSEFRIIQKTP) are cytoplasmic. Residues 373 to 393 (FLAGVFAGSLFWVFVRYVLYV) traverse the membrane as a helical segment. The Lumenal segment spans residues 394–402 (LPATYSTNP). A helical transmembrane segment spans residues 403-423 (FLNLGFVVFFSLTTYFYFYSM). At 424–500 (VADPGYVPKL…NCVGVNNLRQ (77 aa)) the chain is on the cytoplasmic side. The DHHC domain maps to 456-506 (NFCVYCMIRRPLRSKHCRRCSRCVAKHDHHCPWIDNCVGVNNLRQFVLYIL). C486 serves as the catalytic S-palmitoyl cysteine intermediate. The helical transmembrane segment at 501-521 (FVLYILCLEIGIILFLHLTFN) threads the bilayer. At 522–549 (YINGLPAPAEPICNILNDQICSFVLRDT) the chain is on the lumenal side. A helical membrane pass occupies residues 550-570 (FTLLLDVWIAIQLVWVTMLGV). The Cytoplasmic segment spans residues 571–737 (VQLVQVSRNQ…VAYDEAADIV (167 aa)).

The protein belongs to the DHHC palmitoyltransferase family. AKR/ZDHHC17 subfamily.

It is found in the early endosome membrane. Its subcellular location is the golgi apparatus membrane. The enzyme catalyses L-cysteinyl-[protein] + hexadecanoyl-CoA = S-hexadecanoyl-L-cysteinyl-[protein] + CoA. Its function is as follows. Palmitoyltransferase specific for casein kinase 1. The polypeptide is Palmitoyltransferase akr1 (akr1) (Emericella nidulans (strain FGSC A4 / ATCC 38163 / CBS 112.46 / NRRL 194 / M139) (Aspergillus nidulans)).